The following is a 284-amino-acid chain: Putative ABC transporter ATP-binding protein tll2439 (284 aa).

One can recognise an ABC transporter domain in the interval L6–T242. Position 40–47 (G40–S47) interacts with ATP.

This sequence belongs to the ABC transporter superfamily.

The protein localises to the cell inner membrane. Probably part of an ABC transporter complex. Responsible for energy coupling to the transport system. This chain is Putative ABC transporter ATP-binding protein tll2439, found in Thermosynechococcus vestitus (strain NIES-2133 / IAM M-273 / BP-1).